The following is a 765-amino-acid chain: LPS-assembly protein LptD (765 aa).

The first 18 residues, 1-18 (MQIRYLLALSLLPKLVLA), serve as a signal peptide directing secretion.

Belongs to the LptD family. As to quaternary structure, component of the lipopolysaccharide transport and assembly complex. Interacts with LptE and LptA.

The protein localises to the cell outer membrane. Together with LptE, is involved in the assembly of lipopolysaccharide (LPS) at the surface of the outer membrane. This is LPS-assembly protein LptD from Shewanella oneidensis (strain ATCC 700550 / JCM 31522 / CIP 106686 / LMG 19005 / NCIMB 14063 / MR-1).